The chain runs to 580 residues: uncharacterized protein (580 aa).

The PE-PPE domain occupies 300–525; sequence PGYTATFLET…LRVLVELGYD (226 aa).

It belongs to the mycobacterial PPE family.

This is an uncharacterized protein from Mycobacterium tuberculosis (strain CDC 1551 / Oshkosh).